We begin with the raw amino-acid sequence, 444 residues long: Coagulation factor VII (444 aa).

Residues M1 to A21 form the signal peptide. The propeptide occupies A22 to R39. The 45-residue stretch at A40–N84 folds into the Gla domain. A 4-carboxyglutamate mark is found at E45, E46, E53, E55, E58, E59, E64, E65, E68, and E74. A disulfide bond links C56 and C61. In terms of domain architecture, EGF-like 1; calcium-binding spans D85–E121. 9 disulfide bridges follow: C89–C100, C94–C109, C111–C120, C130–C141, C137–C151, C153–C166, C174–C301, C198–C203, and C217–C233. S91 carries O-linked (Glc...) serine; alternate glycosylation. S91 carries O-linked (Xyl...) serine; alternate glycosylation. A glycan (O-linked (Fuc) serine) is linked at S99. D102 is subject to (3R)-3-hydroxyaspartate. Positions D126–T167 constitute an EGF-like 2 domain. The 240-residue stretch at I192–R431 folds into the Peptidase S1 domain. N-linked (GlcNAc...) asparagine glycosylation occurs at N211. The active-site Charge relay system is H232. The N-linked (GlcNAc...) asparagine glycan is linked to N242. The Charge relay system role is filled by D281. N306 carries an N-linked (GlcNAc...) asparagine glycan. C349 and C368 form a disulfide bridge. Residue D377 participates in substrate binding. An intrachain disulfide couples C379 to C407. S383 serves as the catalytic Charge relay system.

This sequence belongs to the peptidase S1 family. Heterodimer of a light chain and a heavy chain linked by a disulfide bond. The vitamin K-dependent, enzymatic carboxylation of some glutamate residues allows the modified protein to bind calcium. In terms of processing, the iron and 2-oxoglutarate dependent 3-hydroxylation of aspartate and asparagine is (R) stereospecific within EGF domains. Post-translationally, O-glycosylated. O-fucosylated by POFUT1 on a conserved serine or threonine residue found in the consensus sequence C2-X(4,5)-[S/T]-C3 of EGF domains, where C2 and C3 are the second and third conserved cysteines. Can be either O-glucosylated or O-xylosylated at Ser-91 by POGLUT1. As to expression, plasma.

It is found in the secreted. It catalyses the reaction Selective cleavage of Arg-|-Ile bond in factor X to form factor Xa.. Initiates the extrinsic pathway of blood coagulation. Serine protease that circulates in the blood in a zymogen form. Factor VII is converted to factor VIIa by factor Xa, factor XIIa, factor IXa, or thrombin by minor proteolysis. In the presence of tissue factor and calcium ions, factor VIIa then converts factor X to factor Xa by limited proteolysis. Factor VIIa also converts factor IX to factor IXa in the presence of tissue factor and calcium. The polypeptide is Coagulation factor VII (F7) (Oryctolagus cuniculus (Rabbit)).